A 122-amino-acid polypeptide reads, in one-letter code: Large ribosomal subunit protein bL12 (122 aa).

This sequence belongs to the bacterial ribosomal protein bL12 family. Homodimer. Part of the ribosomal stalk of the 50S ribosomal subunit. Forms a multimeric L10(L12)X complex, where L10 forms an elongated spine to which 2 to 4 L12 dimers bind in a sequential fashion. Binds GTP-bound translation factors.

Functionally, forms part of the ribosomal stalk which helps the ribosome interact with GTP-bound translation factors. Is thus essential for accurate translation. The chain is Large ribosomal subunit protein bL12 from Neisseria lactamica.